The chain runs to 185 residues: HTH-type transcriptional regulator Hpr (185 aa).

The region spanning 13-157 (AMIFSQRIAQ…LIAILRNIYG (145 aa)) is the HTH marR-type domain. The H-T-H motif DNA-binding region spans 63-86 (ISEIAKFGVMHVSTAFNFSKKLEE).

In terms of assembly, homodimer.

In terms of biological role, negative regulator of protease production and sporulation. The chain is HTH-type transcriptional regulator Hpr from Bacillus cereus (strain G9842).